We begin with the raw amino-acid sequence, 2116 residues long: Non-structural polyprotein p200 (2116 aa).

The tract at residues 36-49 is required for efficient proteolysis and P150-P90 interaction; that stretch reads EVRDVVSAAQKRAI. Residues 57-247 enclose the Alphavirus-like MT domain; it reads VFTQMQVSDH…TRPCTTRIYQ (191 aa). Residues 712–723 are compositionally biased toward low complexity; the sequence is AGPGQSAATSSP. The disordered stretch occupies residues 712–782; it reads AGPGQSAATS…PTSAGPADRA (71 aa). 3 short sequence motifs (pxxPxR; class II SH3-binding) span residues 727–732, 747–752, and 761–766; these read PPPPRC, PPAPAR, and PPAPPR. Over residues 745 to 775 the composition is skewed to pro residues; it reads TPPPAPARDPPPPAPSPPAPPRAGDPVPPTS. A Macro domain is found at 806–985; the sequence is SDIVESYARA…LTHASVLVGA (180 aa). The disordered stretch occupies residues 992 to 1031; sequence VSPPPTEPLASCPAGDPGRPAQRSASPPATPLGDATAPEP. Residues 1000-1301 form the Peptidase C27 domain; the sequence is LASCPAGDPG…WLAVPLSRGG (302 aa). Cys1152 (for cysteine protease activity) is an active-site residue. The interaction with host CALM1 stretch occupies residues 1152–1183; that stretch reads CWLRAAANVAQAARACGAYTSAGCPRCAYGRA. Positions 1175, 1178, 1227, and 1273 each coordinate Zn(2+). Residues 1193-1228 are EF-hand-like; the sequence is FAALSQRWSASHADASSDGTGDPLDPLMETVGCACS. His1273 functions as the For cysteine protease activity in the catalytic mechanism. The (+)RNA virus helicase ATP-binding domain maps to 1320 to 1468; sequence EVRRLGDDAM…VPDRWPTERS (149 aa). 1352-1359 contributes to the a ribonucleoside 5'-triphosphate binding site; that stretch reads MAAGAGKT. The (+)RNA virus helicase C-terminal domain occupies 1469-1609; that stretch reads RHTWRFPDCW…ELKEVPAGID (141 aa). Positions 1700–1900 are involved in P150-P90 interaction; the sequence is YRAGEDGSTL…VELEISAALL (201 aa). One can recognise a RdRp catalytic domain in the interval 1870 to 1981; sequence TNAIEVDFTE…FLPEGARSAA (112 aa). The Human RB1 binding signature appears at 1902–1906; it reads LPCAE.

In terms of assembly, interacts with RNA-directed RNA polymerase p90. Interacts with host CALM1; this interaction is necessary for the protease activity and viral infectivity. Interacts with host C1QBP. Interacts with the capsid protein. Interacts with human RB1/retinoblastoma protein. Interacts with protease/methyltransferase p150. The cofactor is Zn(2+). Post-translationally, specific enzymatic cleavage by its own cysteine protease yield mature proteins p150 and p90.

The protein localises to the host membrane. The protein resides in the host cytoplasm. It localises to the host perinuclear region. It carries out the reaction RNA(n) + a ribonucleoside 5'-triphosphate = RNA(n+1) + diphosphate. It catalyses the reaction a ribonucleoside 5'-triphosphate + H2O = a ribonucleoside 5'-diphosphate + phosphate + H(+). The catalysed reaction is ATP + H2O = ADP + phosphate + H(+). Functionally, probable principal replicase for the negative-strand DNA, which replicates the 40S (+) genomic RNA into (-) antigenomic RNA. It cannot replicate the (-) into (+) until cleaved into p150 and p90 mature proteins. In terms of biological role, protease that cleaves the precursor polyprotein into two mature products. Together with RNA-directed RNA polymerase p90, replicates the 40S genomic and antigenomic RNA by recognizing replications specific signals. The heterodimer P150/p90 is probably the principal replicase for positive-strand genomic RNA and the 24S subgenomic RNA, which codes for structural proteins. Responsible for the mRNA-capping of the viral mRNAs. This function is necessary since all viral RNAs are synthesized in the cytoplasm, and host capping enzymes are restricted to the nucleus. Forms fibers late in the infection that may be involved in cell-to-cell spread of the virus RNA in the absence of virus particle formation. Its function is as follows. Together with protease/methyltransferase p150, replicates the 40S genomic and antigenomic RNA by recognizing replications specific signals. The heterodimer P150/p90 is probably the principal replicase for positive-strand genomic RNA and the 24S subgenomic RNA, which codes for structural proteins. A helicase activity is probably also present. This chain is Non-structural polyprotein p200, found in Homo sapiens (Human).